Consider the following 156-residue polypeptide: Ribosomal RNA large subunit methyltransferase H (156 aa).

S-adenosyl-L-methionine is bound by residues L73, G104, and 123–128 (LSPLTL).

It belongs to the RNA methyltransferase RlmH family. As to quaternary structure, homodimer.

The protein localises to the cytoplasm. The catalysed reaction is pseudouridine(1915) in 23S rRNA + S-adenosyl-L-methionine = N(3)-methylpseudouridine(1915) in 23S rRNA + S-adenosyl-L-homocysteine + H(+). Functionally, specifically methylates the pseudouridine at position 1915 (m3Psi1915) in 23S rRNA. This Sodalis glossinidius (strain morsitans) protein is Ribosomal RNA large subunit methyltransferase H.